The chain runs to 203 residues: Recombination protein RecR (203 aa).

The C4-type zinc-finger motif lies at 57–72; it reads CARCNTFSETELCVLC. The Toprim domain maps to 80-175; that stretch reads DVLCVVEMPA…SVSRIARGLP (96 aa).

The protein belongs to the RecR family.

May play a role in DNA repair. It seems to be involved in an RecBC-independent recombinational process of DNA repair. It may act with RecF and RecO. This Laribacter hongkongensis (strain HLHK9) protein is Recombination protein RecR.